The chain runs to 591 residues: Pyruvate kinase 2 (591 aa).

Arg-38 contacts substrate. K(+)-binding residues include Asn-40, Ser-42, and Asp-72. Residue 40–43 (NFSH) participates in ATP binding. Positions 79 and 164 each coordinate ATP. Residue Glu-229 coordinates Mg(2+). Gly-252, Asp-253, and Thr-285 together coordinate substrate. Asp-253 is a binding site for Mg(2+).

It belongs to the pyruvate kinase family. In the C-terminal section; belongs to the PEP-utilizing enzyme family. As to quaternary structure, homotetramer. Mg(2+) is required as a cofactor. It depends on K(+) as a cofactor.

It catalyses the reaction pyruvate + ATP = phosphoenolpyruvate + ADP + H(+). It functions in the pathway carbohydrate degradation; glycolysis; pyruvate from D-glyceraldehyde 3-phosphate: step 5/5. The chain is Pyruvate kinase 2 (pyk2) from Synechocystis sp. (strain ATCC 27184 / PCC 6803 / Kazusa).